A 138-amino-acid chain; its full sequence is Protein Rrf1 (138 aa).

Residues 4–116 (RILVVQEDPD…LLLALVDRAL (113 aa)) form the Response regulatory domain. 4-aspartylphosphate is present on residues Asp13 and Asp53.

Functionally, may be involved in regulation of gene transcription. Belongs to the family of response regulators, and members of this family involved in the regulation of gene transcription are two-domain proteins. This protein contains only the N-terminal phosphorylation domain and not the C-terminal DNA-binding domain but it may bind to Rrf2 protein and the latter may bind to DNA. The polypeptide is Protein Rrf1 (rrf1) (Nitratidesulfovibrio vulgaris (strain ATCC 29579 / DSM 644 / CCUG 34227 / NCIMB 8303 / VKM B-1760 / Hildenborough) (Desulfovibrio vulgaris)).